The sequence spans 360 residues: DNA replication and repair protein RecF (360 aa).

30-37 contributes to the ATP binding site; sequence GENGAGKT.

The protein belongs to the RecF family.

It is found in the cytoplasm. The RecF protein is involved in DNA metabolism; it is required for DNA replication and normal SOS inducibility. RecF binds preferentially to single-stranded, linear DNA. It also seems to bind ATP. In Deinococcus deserti (strain DSM 17065 / CIP 109153 / LMG 22923 / VCD115), this protein is DNA replication and repair protein RecF.